A 36-amino-acid chain; its full sequence is Pancreatic polypeptide (36 aa).

Tyr36 is modified (tyrosine amide).

It belongs to the NPY family.

It localises to the secreted. Its function is as follows. Hormone secreted by pancreatic cells that acts as a regulator of pancreatic and gastrointestinal functions probably by signaling through the G protein-coupled receptor NPY4R2. This is Pancreatic polypeptide (PPY) from Equus przewalskii (Przewalski's horse).